We begin with the raw amino-acid sequence, 293 residues long: Iron-sulfur cluster transfer protein Nubpl (293 aa).

The segment at 214 to 217 (CQNC) is CXXC motif probably involved in coordinating iron-sulfur cluster binding.

It belongs to the Mrp/NBP35 ATP-binding proteins family. Homodimer; dimerization is not reliant on iron-sulfur cluster binding. The cofactor is [4Fe-4S] cluster.

It is found in the mitochondrion membrane. In terms of biological role, iron-sulfur cluster transfer protein involved in the assembly of the mitochondrial membrane respiratory chain NADH dehydrogenase (Complex I). May deliver one or more Fe-S clusters to complex I subunits. Alleviates pausing in mitochondrial DNA (mtDNA) replication at slow zone 2. May be involved in mtDNA-helicase-mediated mtDNA unwinding and replication by transferring iron-sulfur clusters. In Drosophila melanogaster (Fruit fly), this protein is Iron-sulfur cluster transfer protein Nubpl.